The chain runs to 96 residues: Co-chaperonin GroES (96 aa).

It belongs to the GroES chaperonin family. As to quaternary structure, heptamer of 7 subunits arranged in a ring. Interacts with the chaperonin GroEL.

The protein localises to the cytoplasm. In terms of biological role, together with the chaperonin GroEL, plays an essential role in assisting protein folding. The GroEL-GroES system forms a nano-cage that allows encapsulation of the non-native substrate proteins and provides a physical environment optimized to promote and accelerate protein folding. GroES binds to the apical surface of the GroEL ring, thereby capping the opening of the GroEL channel. The sequence is that of Co-chaperonin GroES from Allochromatium vinosum (Chromatium vinosum).